A 695-amino-acid chain; its full sequence is ATP-dependent permease MDL1, mitochondrial (695 aa).

A mitochondrion-targeting transit peptide spans 1–100 (MIVRMIRLCK…RLFVLSKPES (100 aa)). Helical transmembrane passes span 103–123 (IGLA…VPSV), 156–176 (FTAL…RIII), 242–262 (FVGF…MMIL), 337–357 (GLFF…LLLV), and 372–392 (LSSF…LSSF). The 296-residue stretch at 103–398 (IGLALLLILI…LSSFYSELMK (296 aa)) folds into the ABC transmembrane type-1 domain. Residues 432 to 673 (IVFKNVSFTY…PNSELNALLA (242 aa)) form the ABC transporter domain. Position 467 to 474 (467 to 474 (GPSGSGKS)) interacts with ATP.

It belongs to the ABC transporter superfamily. ABCB family. Mitochondrial peptide exporter (TC 3.A.1.212) subfamily.

It localises to the mitochondrion inner membrane. Functionally, mediates export of peptides with molecular masses of 2100 to 600 daltons generated upon proteolysis of mitochondrial inner membrane proteins. This is ATP-dependent permease MDL1, mitochondrial (MDL1) from Saccharomyces cerevisiae (strain ATCC 204508 / S288c) (Baker's yeast).